A 272-amino-acid polypeptide reads, in one-letter code: Hemin import ATP-binding protein HmuV (272 aa).

In terms of domain architecture, ABC transporter spans 2–255 (LNADHLHVAR…EPIARCYGFR (254 aa)). 34-41 (GRNGAGKS) serves as a coordination point for ATP.

This sequence belongs to the ABC transporter superfamily. Heme (hemin) importer (TC 3.A.1.14.5) family. The complex is composed of two ATP-binding proteins (HmuV), two transmembrane proteins (HmuU) and a solute-binding protein (HmuT).

Its subcellular location is the cell inner membrane. In terms of biological role, part of the ABC transporter complex HmuTUV involved in hemin import. Responsible for energy coupling to the transport system. This is Hemin import ATP-binding protein HmuV from Burkholderia mallei (strain ATCC 23344).